An 801-amino-acid polypeptide reads, in one-letter code: Quinoprotein glucose dehydrogenase A (801 aa).

An N-terminal signal peptide occupies residues 1–33 (MNQPTSRSGLTTFTVIIIGLLALFLLIGGIWLA). Transmembrane regions (helical) follow at residues 39-55 (IYYI…AWQL), 59-79 (ASTA…WSVW), 94-108 (ILGI…PAVT), and 119-138 (VALS…SIFN). Catalysis depends on Asp471, which acts as the Proton acceptor.

This sequence belongs to the bacterial PQQ dehydrogenase family. Monomer. Requires pyrroloquinoline quinone as cofactor.

Its subcellular location is the cell inner membrane. The enzyme catalyses D-glucose + A = D-glucono-1,5-lactone + AH2. Catalyzes an exceptionally high rate of oxidation of a wide range of aldose sugars, including D-glucose, galactose, arabinose and xylose, and also the disaccharides lactose, cellobiose and maltose. The polypeptide is Quinoprotein glucose dehydrogenase A (gdhA) (Acinetobacter calcoaceticus).